Consider the following 192-residue polypeptide: Protein SHORT HYPOCOTYL IN WHITE LIGHT 1 (192 aa).

The Nuclear localization signal motif lies at 43–50 (FRRLNRSL). The segment at 70–92 (GGDNYDVVPDDDGFSDDDDEEDE) is disordered. Over residues 77–92 (VPDDDGFSDDDDEEDE) the composition is skewed to acidic residues. The next 2 membrane-spanning stretches (helical) occupy residues 122 to 142 (ILPAAMSPRLVSFAVDGILLL) and 159 to 179 (GGTVFTVILLIRLFWAAASFF).

As to quaternary structure, interacts with HY5 and COP1 in the nucleus. Expressed in young seedlings (e.g. hypocotyl and cotyledons) and in green tissues (e.g. leaves, stems, sepals, and young siliques).

It localises to the nucleus membrane. Negative regulator of photomorphogenesis modulating both light and abscisic acid (ABA) signaling pathways. Negatively regulates the light-mediated inhibition of hypocotyl elongation, probably in a PHYB-mediated signaling pathway, but promotes flowering time (especially in long days) and lateral root formation. Enhances light-regulated gene expression. Promotes COP1-mediated degradation of HY5 during seedling development (e.g. hypocotyl growth) through enhanced ubiquitination in the darkness. Also involved in root gravitropism. The protein is Protein SHORT HYPOCOTYL IN WHITE LIGHT 1 of Arabidopsis thaliana (Mouse-ear cress).